We begin with the raw amino-acid sequence, 481 residues long: Dual specificity protein kinase CLK4 (481 aa).

2 disordered regions span residues 1 to 46 and 102 to 143; these read MRHS…CKPH and SKSS…EDDE. Residues 8 to 24 show a composition bias toward basic and acidic residues; sequence HCPDWDSRESWGHESYR. 2 stretches are compositionally biased toward basic residues: residues 25-34 and 106-136; these read GSHKRKRRSH and VRSR…RKRS. Serine 136 and serine 138 each carry phosphoserine. The 317-residue stretch at 159-475 folds into the Protein kinase domain; it reads YEIVDTLGEG…LDEALQHPFF (317 aa). Residues 165–173 and lysine 189 contribute to the ATP site; that span reads LGEGAFGKV. Aspartate 286 functions as the Proton acceptor in the catalytic mechanism.

The protein belongs to the protein kinase superfamily. CMGC Ser/Thr protein kinase family. Lammer subfamily. In terms of assembly, interacts with UBL5. In terms of processing, autophosphorylates on all three types of residues. As to expression, expressed in liver, kidney, heart, muscle, brain and endothelial cells.

The protein localises to the nucleus. It catalyses the reaction L-seryl-[protein] + ATP = O-phospho-L-seryl-[protein] + ADP + H(+). The catalysed reaction is L-threonyl-[protein] + ATP = O-phospho-L-threonyl-[protein] + ADP + H(+). It carries out the reaction L-tyrosyl-[protein] + ATP = O-phospho-L-tyrosyl-[protein] + ADP + H(+). TG003 inhibits its kinase activity and affects the regulation of alternative splicing mediated by phosphorylation of SR proteins. Its function is as follows. Dual specificity kinase acting on both serine/threonine and tyrosine-containing substrates. Phosphorylates serine- and arginine-rich (SR) proteins of the spliceosomal complex and may be a constituent of a network of regulatory mechanisms that enable SR proteins to control RNA splicing. Phosphorylates SRSF1 and SRSF3. Required for the regulation of alternative splicing of MAPT/TAU. Regulates the alternative splicing of tissue factor (F3) pre-mRNA in endothelial cells. This chain is Dual specificity protein kinase CLK4 (CLK4), found in Homo sapiens (Human).